The following is a 396-amino-acid chain: MAKAKFERNKPHCNIGTIGHVDHGKTSLTAAITKILAETGGATFTAYDQIDKAPEEKARGITISTAHVEYETQNRHYAHVDCPGHADYVKNMITGAAQMDGAILVVSAADGPMPQTREHILLARQVGVPALVVFLNKCDMVDDPELLELVELEVRELLSKYEFPGDKIPIIKGSALAALEDSDKKLGHDAILELMRNVDEYIPQPERPIDQPFLMPVEDVFSISGRGTVVTGRVERGVIKVGEEIEIVGIRPTQKTTVTGVEMFRKLLDQGQAGDNIGALLRGTKREDVERGQVLCKPGSVKPHTKFKAEAYILTKEEGGRHTPFFTNYRPQFYFRTTDVTGVVHLPEGTEMVMPGDNIAMEVHLIVPIAMEEKLRFAIREGGRTVGAGVVASIIE.

Positions 10–206 (KPHCNIGTIG…NVDEYIPQPE (197 aa)) constitute a tr-type G domain. The G1 stretch occupies residues 19–26 (GHVDHGKT). Residue 19–26 (GHVDHGKT) participates in GTP binding. T26 lines the Mg(2+) pocket. The G2 stretch occupies residues 60–64 (GITIS). The segment at 81-84 (DCPG) is G3. Residues 81 to 85 (DCPGH) and 136 to 139 (NKCD) each bind GTP. The interval 136 to 139 (NKCD) is G4. Residues 174-176 (SAL) form a G5 region.

Belongs to the TRAFAC class translation factor GTPase superfamily. Classic translation factor GTPase family. EF-Tu/EF-1A subfamily. In terms of assembly, monomer.

The protein localises to the cytoplasm. It carries out the reaction GTP + H2O = GDP + phosphate + H(+). Its function is as follows. GTP hydrolase that promotes the GTP-dependent binding of aminoacyl-tRNA to the A-site of ribosomes during protein biosynthesis. The polypeptide is Elongation factor Tu (Bradyrhizobium sp. (strain BTAi1 / ATCC BAA-1182)).